The primary structure comprises 706 residues: Gamma-adducin (706 aa).

Polar residues predominate over residues 1 to 10; sequence MSSDASQGVI. A disordered region spans residues 1–20; that stretch reads MSSDASQGVITTPPPPSMPH. Ser2 carries the post-translational modification N-acetylserine. Phosphoserine is present on residues Ser42, Ser64, Ser402, Ser414, Ser423, Ser442, and Ser461. 4 disordered regions span residues 471–497, 535–555, 575–610, and 666–706; these read AEDS…LNTN, PSTM…NPFS, GLED…KLEE, and EKIE…KVEA. A Glycyl lysine isopeptide (Lys-Gly) (interchain with G-Cter in SUMO2) cross-link involves residue Lys484. 7 positions are modified to phosphoserine: Ser585, Ser590, Ser673, Ser677, Ser679, Ser681, and Ser683. The span at 589–602 shows a compositional bias: low complexity; the sequence is SSVSQIQSQTQSPQ. Basic residues predominate over residues 682-706; the sequence is PSKKKKKFRTPSFLKKNKKKEKVEA. An interaction with calmodulin region spans residues 684-701; sequence KKKKKFRTPSFLKKNKKK.

Belongs to the aldolase class II family. Adducin subfamily. As to quaternary structure, heterodimer of an alpha and a gamma subunit. Sumoylated. Post-translationally, proteolytically cleaved by asparagine endopeptidase (AEP) into 2 fragments. Overexpression of the 1-357 fragment induces neuronal apoptosis, and overexpression of either 1-357 or 358-706 fragment increases the degeneration of dendritic spines. Overexpression of the 1-357 fragment impairs neurite outgrowth by downregulating the expression of Rac2, and induces synaptic dysfunction and cognitive impairments in tau P301S transgenic mice, a mouse model for Alzheimer disease (AD). In terms of tissue distribution, ubiquitously expressed. As to expression, cleavage fragment 1-357 is abundantly expressed in the brain of patients with Alzheimer disease (AD), but hardly detectable in age-matched control individuals (at protein level).

Its subcellular location is the cytoplasm. It localises to the cytoskeleton. The protein resides in the cell membrane. Membrane-cytoskeleton-associated protein that promotes the assembly of the spectrin-actin network. Plays a role in actin filament capping. Binds to calmodulin. Involved in myogenic reactivity of the renal afferent arteriole (Af-art), renal interlobular arteries and middle cerebral artery (MCA) to increased perfusion pressure. Involved in regulation of potassium channels in the vascular smooth muscle cells (VSMCs) of the Af-art and MCA ex vivo. Involved in regulation of glomerular capillary pressure, glomerular filtration rate (GFR) and glomerular nephrin expression in response to hypertension. Involved in renal blood flow (RBF) autoregulation. Plays a role in podocyte structure and function. Regulates globular monomer actin (G-actin) and filamentous polymer actin (F-actin) ratios in the primary podocytes affecting actin cytoskeleton organization. Regulates expression of synaptopodin, RhoA, Rac1 and CDC42 in the renal cortex and the primary podocytes. Regulates expression of nephrin in the glomeruli and in the primary podocytes, expression of nephrin and podocinin in the renal cortex, and expression of focal adhesion proteins integrin alpha-3 and integrin beta-1 in the glomeruli. Involved in cell migration and cell adhesion of podocytes, and in podocyte foot process effacement. Regulates expression of profibrotics markers MMP2, MMP9, TGF beta-1, tubular tight junction protein E-cadherin, and mesenchymal markers vimentin and alpha-SMA. Promotes the growth of neurites. This Homo sapiens (Human) protein is Gamma-adducin (ADD3).